Consider the following 364-residue polypeptide: Natterin-3 (364 aa).

Positions 1–18 (MKLSVLVVTLLAVSWTSA) are cleaved as a signal peptide. The propeptide occupies 19–42 (QPETFSIQTKEANMNPEPANIRVA).

This sequence belongs to the natterin family. In terms of processing, contains 4 disulfide bonds. In terms of tissue distribution, expressed by the venom gland.

The protein localises to the secreted. Its activity is regulated as follows. Inhibited by tissue-kallikrein inhibitor TKI and trasylol. Plasma kallikrein inhibitor PKSI527 and classical inhibitors of serine-, metallo-, thiol- or aspartate-peptidases evokes a minor inhibition of the peptide digestion. Its function is as follows. Shows nociceptive, edema-inducing and kininogenase activity with release of kallidin from low molecular weight kininogen. The cleavage occurs at Met-Lys bonds. The sequence is that of Natterin-3 from Thalassophryne nattereri (Copper Joe toadfish).